The primary structure comprises 434 residues: Trigger factor 2 (434 aa).

Positions 164–247 (GDTVTVDYDC…VKKVERIEIL (84 aa)) constitute a PPIase FKBP-type domain.

This sequence belongs to the FKBP-type PPIase family. Tig subfamily.

The protein localises to the cytoplasm. It catalyses the reaction [protein]-peptidylproline (omega=180) = [protein]-peptidylproline (omega=0). Its function is as follows. Involved in protein export. Acts as a chaperone by maintaining the newly synthesized protein in an open conformation. Functions as a peptidyl-prolyl cis-trans isomerase. In Desulfitobacterium hafniense (strain Y51), this protein is Trigger factor 2.